The following is an 81-amino-acid chain: RNA-binding protein Hfq (81 aa).

Residues 10 to 69 (DPFLNTLRREHVPVSIYLVNGIKLQGQIESFDQYVVLLRNTVTQMVYKHAISTIVPGRAV) form the Sm domain.

It belongs to the Hfq family. In terms of assembly, homohexamer.

Its function is as follows. RNA chaperone that binds small regulatory RNA (sRNAs) and mRNAs to facilitate mRNA translational regulation in response to envelope stress, environmental stress and changes in metabolite concentrations. Also binds with high specificity to tRNAs. The sequence is that of RNA-binding protein Hfq from Variovorax paradoxus (strain S110).